A 244-amino-acid polypeptide reads, in one-letter code: MNINRQTAFITGANQGIGKAIAKKLIKKGIQVIGTSTTEDGVKRINDYLEGNGFGFVLNLKNIDSITEKIQEIYKKKHSIDILINNAGIKEDNLLVNMKSTEWDDVIKTNLSSVFHLVKSVIRSMIKKRQGRIITIGSVIAYTGNKGQVNYSASKSGLIGFHKSLALEVASKGITVNIVSPGLIKTNFTEKLNSIQYQKYLSNIPMKRFGQKEEVADAVIFLASKKASYITGHTLHVNGGMYMI.

NADP(+) is bound by residues 12 to 15 and threonine 37; that span reads GANQ. Residues glutamate 50 and glycine 53 each contribute to the Ca(2+) site. Residues 59–60 and asparagine 86 contribute to the NADP(+) site; that span reads NL. Serine 138 contacts substrate. Residue asparagine 145 participates in Ca(2+) binding. Tyrosine 151 functions as the Proton acceptor in the catalytic mechanism. Residues 151–155 and isoleucine 184 each bind NADP(+); that span reads YSASK. Threonine 234 contacts Ca(2+).

Belongs to the short-chain dehydrogenases/reductases (SDR) family. As to quaternary structure, homotetramer.

The catalysed reaction is a (3R)-hydroxyacyl-[ACP] + NADP(+) = a 3-oxoacyl-[ACP] + NADPH + H(+). Its pathway is lipid metabolism; fatty acid biosynthesis. Its function is as follows. Catalyzes the NADPH-dependent reduction of beta-ketoacyl-ACP substrates to beta-hydroxyacyl-ACP products, the first reductive step in the elongation cycle of fatty acid biosynthesis. The sequence is that of 3-oxoacyl-[acyl-carrier-protein] reductase FabG (fabG) from Buchnera aphidicola subsp. Acyrthosiphon pisum (strain APS) (Acyrthosiphon pisum symbiotic bacterium).